We begin with the raw amino-acid sequence, 197 residues long: Auxin-responsive protein IAA31 (197 aa).

2 disordered regions span residues 1–43 and 66–90; these read MENL…DQAK and SCLQPTTTTTKSKPPPAAAAAETQQ. Positions 9–13 match the EAR-like (transcriptional repression) motif; that stretch reads LRLGL. The 88-residue stretch at 99 to 186 folds into the PB1 domain; sequence GLFVKVSMDG…TCKRLRIMKG (88 aa).

It belongs to the Aux/IAA family. Homodimers and heterodimers. In terms of tissue distribution, highly expressed in etiolated seedlings. Expressed in roots.

The protein localises to the nucleus. In terms of biological role, aux/IAA proteins are short-lived transcriptional factors that function as repressors of early auxin response genes at low auxin concentrations. The polypeptide is Auxin-responsive protein IAA31 (IAA31) (Oryza sativa subsp. japonica (Rice)).